Reading from the N-terminus, the 165-residue chain is Thiol peroxidase (165 aa).

The Thioredoxin domain occupies R18 to K164. The active-site Cysteine sulfenic acid (-SOH) intermediate is the C60. A disulfide bond links C60 and C94.

The protein belongs to the peroxiredoxin family. Tpx subfamily. Homodimer.

The enzyme catalyses a hydroperoxide + [thioredoxin]-dithiol = an alcohol + [thioredoxin]-disulfide + H2O. Its function is as follows. Thiol-specific peroxidase that catalyzes the reduction of hydrogen peroxide and organic hydroperoxides to water and alcohols, respectively. Plays a role in cell protection against oxidative stress by detoxifying peroxides. In Listeria innocua serovar 6a (strain ATCC BAA-680 / CLIP 11262), this protein is Thiol peroxidase.